Reading from the N-terminus, the 331-residue chain is Probable zinc-binding oxidoreductase, mitochondrial (331 aa).

Residues 1–29 (MASVTSVPKTGRSVNQDVPATTLTLQTRP) show a composition bias toward polar residues. Residues 1-34 (MASVTSVPKTGRSVNQDVPATTLTLQTRPTPAPN) form a disordered region.

It belongs to the zinc-containing alcohol dehydrogenase family. Quinone oxidoreductase subfamily.

Its subcellular location is the mitochondrion. In Arthroderma benhamiae (strain ATCC MYA-4681 / CBS 112371) (Trichophyton mentagrophytes), this protein is Probable zinc-binding oxidoreductase, mitochondrial.